Here is a 314-residue protein sequence, read N- to C-terminus: Ribosomal RNA small subunit methyltransferase H 2 (314 aa).

S-adenosyl-L-methionine is bound by residues 33–35 (AGH), aspartate 53, tyrosine 80, aspartate 101, and glutamine 108. A disordered region spans residues 293–314 (KELEENSRSKSAKLRVFEKNDL).

The protein belongs to the methyltransferase superfamily. RsmH family.

The protein localises to the cytoplasm. It catalyses the reaction cytidine(1402) in 16S rRNA + S-adenosyl-L-methionine = N(4)-methylcytidine(1402) in 16S rRNA + S-adenosyl-L-homocysteine + H(+). Its function is as follows. Specifically methylates the N4 position of cytidine in position 1402 (C1402) of 16S rRNA. This chain is Ribosomal RNA small subunit methyltransferase H 2, found in Agathobacter rectalis (strain ATCC 33656 / DSM 3377 / JCM 17463 / KCTC 5835 / VPI 0990) (Eubacterium rectale).